The primary structure comprises 436 residues: Cysteine--tRNA ligase (436 aa).

Cys24 provides a ligand contact to Zn(2+). A 'HIGH' region motif is present at residues 26–36 (PTVYNHIHIGN). The Zn(2+) site is built by Cys202, His227, and Glu231. The 'KMSKS' region motif lies at 259-263 (KMSKS). An ATP-binding site is contributed by Lys262.

It belongs to the class-I aminoacyl-tRNA synthetase family. As to quaternary structure, monomer. Zn(2+) serves as cofactor.

The protein localises to the cytoplasm. The enzyme catalyses tRNA(Cys) + L-cysteine + ATP = L-cysteinyl-tRNA(Cys) + AMP + diphosphate. The chain is Cysteine--tRNA ligase from Ureaplasma parvum serovar 3 (strain ATCC 700970).